Consider the following 148-residue polypeptide: Deoxyuridine 5'-triphosphate nucleotidohydrolase (148 aa).

Substrate-binding positions include 68 to 70 (RSG), Asn-81, 85 to 87 (TID), and Lys-95.

The protein belongs to the dUTPase family. Mg(2+) serves as cofactor.

The catalysed reaction is dUTP + H2O = dUMP + diphosphate + H(+). Its pathway is pyrimidine metabolism; dUMP biosynthesis; dUMP from dCTP (dUTP route): step 2/2. This enzyme is involved in nucleotide metabolism: it produces dUMP, the immediate precursor of thymidine nucleotides and it decreases the intracellular concentration of dUTP so that uracil cannot be incorporated into DNA. The polypeptide is Deoxyuridine 5'-triphosphate nucleotidohydrolase (Rickettsia prowazekii (strain Madrid E)).